The sequence spans 441 residues: Probable tRNA pseudouridine synthase D (441 aa).

Asp89 acts as the Nucleophile in catalysis. In terms of domain architecture, TRUD spans 168-393 (GVPNFFGVQR…SKGTRREVLL (226 aa)).

Belongs to the pseudouridine synthase TruD family.

It carries out the reaction uridine(13) in tRNA = pseudouridine(13) in tRNA. Functionally, could be responsible for synthesis of pseudouridine from uracil-13 in transfer RNAs. This Methanosarcina acetivorans (strain ATCC 35395 / DSM 2834 / JCM 12185 / C2A) protein is Probable tRNA pseudouridine synthase D.